We begin with the raw amino-acid sequence, 943 residues long: Translation initiation factor IF-2 (943 aa).

Residues L29 to L349 are disordered. Composition is skewed to basic and acidic residues over residues P69 to S82, F112 to N137, Q145 to N155, D163 to A196, and R224 to Q253. A compositionally biased stretch (low complexity) spans A254 to K266. Basic and acidic residues predominate over residues K296–K309. Low complexity predominate over residues N313–K332. The region spanning E445–K614 is the tr-type G domain. The tract at residues G454–T461 is G1. G454–T461 contributes to the GTP binding site. Residues G479–H483 form a G2 region. Residues D500 to G503 form a G3 region. Residues D500 to H504 and N554 to D557 each bind GTP. The segment at N554–D557 is G4. A G5 region spans residues S590–K592.

Belongs to the TRAFAC class translation factor GTPase superfamily. Classic translation factor GTPase family. IF-2 subfamily.

Its subcellular location is the cytoplasm. One of the essential components for the initiation of protein synthesis. Protects formylmethionyl-tRNA from spontaneous hydrolysis and promotes its binding to the 30S ribosomal subunits. Also involved in the hydrolysis of GTP during the formation of the 70S ribosomal complex. This Streptococcus thermophilus (strain ATCC BAA-491 / LMD-9) protein is Translation initiation factor IF-2.